The chain runs to 167 residues: Phosphopantetheine adenylyltransferase (167 aa).

Position 11 (Ser11) interacts with substrate. ATP contacts are provided by residues 11–12 and His19; that span reads SF. 3 residues coordinate substrate: Lys43, Thr76, and Arg90. Residues 91–93, Glu101, and 126–132 contribute to the ATP site; these read GIR and YDALSST.

It belongs to the bacterial CoaD family. Homohexamer. The cofactor is Mg(2+).

It is found in the cytoplasm. It catalyses the reaction (R)-4'-phosphopantetheine + ATP + H(+) = 3'-dephospho-CoA + diphosphate. It functions in the pathway cofactor biosynthesis; coenzyme A biosynthesis; CoA from (R)-pantothenate: step 4/5. Reversibly transfers an adenylyl group from ATP to 4'-phosphopantetheine, yielding dephospho-CoA (dPCoA) and pyrophosphate. The polypeptide is Phosphopantetheine adenylyltransferase (Lacticaseibacillus paracasei (strain ATCC 334 / BCRC 17002 / CCUG 31169 / CIP 107868 / KCTC 3260 / NRRL B-441) (Lactobacillus paracasei)).